Consider the following 172-residue polypeptide: Disulfide bond formation protein B (172 aa).

Over 1–11 (MNPFRWSFRAQ) the chain is Cytoplasmic. Residues 12–28 (FLLGFLACAGLLAYAIY) traverse the membrane as a helical segment. Residues 29-46 (VQLHLGLEPCPLCIFQRI) lie on the Periplasmic side of the membrane. Residues Cys-38 and Cys-41 are joined by a disulfide bond. A helical transmembrane segment spans residues 47 to 63 (AFAALAVFFLLGALHGP). Topologically, residues 64 to 70 (RAAAGRK) are cytoplasmic. The helical transmembrane segment at 71-88 (VYGVLSFIAAGVGMGIAA) threads the bilayer. The Periplasmic segment spans residues 89–145 (RHVWVQIRPKDMMSSCGPPLSFLSETMGPFEVFRTVLTGTGDCGNIDWRFLGLSMPM). A disulfide bridge links Cys-104 with Cys-131. The helical transmembrane segment at 146–164 (WSMVWFVGLALWALYAGFK) threads the bilayer. The Cytoplasmic segment spans residues 165-172 (VRRSSVHH).

The protein belongs to the DsbB family.

Its subcellular location is the cell inner membrane. Its function is as follows. Required for disulfide bond formation in some periplasmic proteins. Acts by oxidizing the DsbA protein. This Xanthomonas axonopodis pv. citri (strain 306) protein is Disulfide bond formation protein B.